The primary structure comprises 514 residues: Cilia- and flagella-associated protein 53 (514 aa).

2 coiled-coil regions span residues I91–F148 and K203–E474.

The protein belongs to the CFAP53 family. Microtubule inner protein component of sperm flagellar doublet microtubules. Interacts with PIERCE1 and PIERCE2; the interactions link outer dynein arms docking complex (ODA-DC) to the internal microtubule inner proteins (MIP) in cilium axoneme. Interacts with CCDC38. Interacts with CCDC42 and IFT88. Interacts with centriolar satellite proteins PIBF1/CEP90 and PCM1. Interacts with dyneins DNAIC1, DNAIC2 AND DNAH11 and with ODA-DC component ODAD4/TTC25. Expressed in skin fibroblasts (at protein level). Expressed in nasal respiratory epithelial cells (at protein level). Expressed in airway epithelial cells.

It is found in the cytoplasm. Its subcellular location is the cytoskeleton. The protein resides in the cilium axoneme. It localises to the flagellum axoneme. The protein localises to the microtubule organizing center. It is found in the centrosome. Its subcellular location is the centriole. The protein resides in the centriolar satellite. It localises to the spindle pole. The protein localises to the cell projection. It is found in the cilium. Its function is as follows. Microtubule inner protein (MIP) part of the dynein-decorated doublet microtubules (DMTs) in cilia axoneme, which is required for motile cilia beating. Regulates motility patterns of both 9+0 and 9+2 motile cilia through differential localization and recruitment of axonemal dynein components. Required for centriolar satellite integrity and non-motile cilium assembly. Required for motile cilium formation. Through its role in the beating of primary cilia, involved in the establishment of organ laterality during embryogenesis. Required for sperm flagellum biogenesis and is essential for male fertility. The polypeptide is Cilia- and flagella-associated protein 53 (Homo sapiens (Human)).